The sequence spans 598 residues: MASLRRVKVLLVLNLIAVAGFVIFLAKCRPIAVRSGDAFHEIRPRAEVANLSAHSASPIQDAVLKRLSLLEDIVYRQLNGLSKSLGLIEGYGGRGKGGLPATLSPSEEEKAKGPHEKYGYNSYLSEKISLDRSIPDYRPTKCKELKYSKELPQISIIFIFVNEALSVILRSVHSAVNHTPTHLLKEIILVDDNSDEEELKAPLEEYVHKRYPGLVKVVRNQKREGLIRARIEGWKAATGQVTGFFDAHVEFTAGWAEPVLSRIQENRKRVILPSIDNIKQDNFEVQRYENSAHGYSWELWCMYISPPKDWWDAGDPSLPIRTPAMIGCSFVVNRKFFGEIGLLDPGMDVYGGENIELGIKVWLCGGSMEVLPCSRVAHIERKKKPYNSNIGFYTKRNALRVAEVWMDDYKSHVYIAWNLPLENPGIDIGDVSERKALRKSLKCKNFQWYLDHVYPEMRRYNNTIAYGELRNNKAKDVCLDQGPLENHTAILYPCHGWGPQLARYTKEGFLHLGALGTTTLLPDTRCLVDNSKSRLPQLLDCDKVKSSLYKRWNFIQNGAIMNKGTGRCLEVENRGLAGIDLILRSCTGQRWAIKNPIK.

At 1-6 (MASLRR) the chain is on the cytoplasmic side. The chain crosses the membrane as a helical; Signal-anchor for type II membrane protein span at residues 7–27 (VKVLLVLNLIAVAGFVIFLAK). Over 28–598 (CRPIAVRSGD…QRWAIKNPIK (571 aa)) the chain is Lumenal. Asn50 carries an N-linked (GlcNAc...) asparagine glycan. 2 disulfides stabilise this stretch: Cys142–Cys373 and Cys364–Cys443. A catalytic subdomain A region spans residues 151–262 (LPQISIIFIF…AGWAEPVLSR (112 aa)). Substrate contacts are provided by Asp192 and Arg223. Residues Asp246, His248, and His378 each contribute to the Mn(2+) site. Residues 319–381 (PIRTPAMIGC…PCSRVAHIER (63 aa)) are catalytic subdomain B. Residues Arg381 and Tyr386 each coordinate substrate. Residues Asn461 and Asn486 are each glycosylated (N-linked (GlcNAc...) asparagine). One can recognise a Ricin B-type lectin domain in the interval 465-594 (AYGELRNNKA…SCTGQRWAIK (130 aa)). 3 disulfide bridges follow: Cys478-Cys494, Cys526-Cys541, and Cys568-Cys586.

The protein belongs to the glycosyltransferase 2 family. GalNAc-T subfamily. Requires Mn(2+) as cofactor.

Its subcellular location is the golgi apparatus membrane. It carries out the reaction L-seryl-[protein] + UDP-N-acetyl-alpha-D-galactosamine = a 3-O-[N-acetyl-alpha-D-galactosaminyl]-L-seryl-[protein] + UDP + H(+). It catalyses the reaction L-threonyl-[protein] + UDP-N-acetyl-alpha-D-galactosamine = a 3-O-[N-acetyl-alpha-D-galactosaminyl]-L-threonyl-[protein] + UDP + H(+). Its pathway is protein modification; protein glycosylation. Functionally, may catalyze the initial reaction in O-linked oligosaccharide biosynthesis, the transfer of an N-acetyl-D-galactosamine residue to a serine or threonine residue on the protein receptor. This Mus musculus (Mouse) protein is Polypeptide N-acetylgalactosaminyltransferase 17.